A 449-amino-acid polypeptide reads, in one-letter code: Nucleoporin NUP42 (449 aa).

The C3H1-type zinc finger occupies 1 to 25; it reads MAICSFFLQGRCRYGEKCWNEHPRG. Disordered regions lie at residues 22 to 84 and 218 to 237; these read HPRG…GFDN and DMTS…SSFP. Polar residues-rich tracts occupy residues 47-83 and 218-227; these read WGSS…SGFD and DMTSGYNGQQ. FG repeat units lie at residues 231–232, 274–275, 284–285, 305–306, 314–315, 335–336, and 347–348; these read FG.

Probable component of the nuclear pore complex (NPC).

It localises to the nucleus. It is found in the nuclear pore complex. The protein localises to the nucleus membrane. In terms of biological role, required for the export of mRNAs containing poly(A) tails from the nucleus into the cytoplasm. The protein is Nucleoporin NUP42 (nup42) of Xenopus tropicalis (Western clawed frog).